Here is a 422-residue protein sequence, read N- to C-terminus: uncharacterized protein (422 aa).

3 disordered regions span residues 1 to 21 (MRDN…TTYD), 158 to 218 (TAKS…TEQV), and 246 to 271 (DFGT…PWLT). Over residues 11–21 (AGSNTQQTTYD) the composition is skewed to polar residues. Residues 170–199 (SKSSNGSSSTSTTQRGGSSNENKVKALQVA) are compositionally biased toward low complexity. Polar residues-rich tracts occupy residues 205–216 (GSQGNSGDQGTE) and 250–261 (APSSSGSGTQDG). Positions 262-271 (TPTPWTPWLT) are enriched in low complexity.

This sequence belongs to the adhesin P1 family.

This is an uncharacterized protein from Mycoplasma pneumoniae (strain ATCC 29342 / M129 / Subtype 1) (Mycoplasmoides pneumoniae).